A 261-amino-acid polypeptide reads, in one-letter code: (R)-S-adenosyl-L-methionine hydrolase (261 aa).

Positions 12, 72, and 187 each coordinate adenosine. Positions 187, 231, and 239 each coordinate (R)-S-adenosyl-L-methionine. Val-239 contacts adenosine.

The protein belongs to the SAM hydrolase / SAM-dependent halogenase family.

The catalysed reaction is (R)-S-adenosyl-L-methionine + H2O = adenosine + L-methionine + H(+). Functionally, specifically hydrolyzes (R)-S-adenosyl-L-methionine ((R)-SAM), the inactive form of the ubiquitous cofactor SAM, into adenosine and L-methionine. Is stereoselective as it cannot use the active form of SAM, (S)-S-adenosyl-L-methionine, as substrate. Likely plays a role in preventing accumulation of (R)-S-adenosyl-L-methionine in cells; maintenance of (S)-S-denosyl-L-methionine homochirality is important for cellular health given that the (R)-form is largely inactive as a methyl donor and can function as an inhibitor of methyltransferases. The sequence is that of (R)-S-adenosyl-L-methionine hydrolase from Salinispora tropica (strain ATCC BAA-916 / DSM 44818 / JCM 13857 / NBRC 105044 / CNB-440).